Consider the following 868-residue polypeptide: MASLDNLVARYQRCFNDQSLKNSTIELEIRFQQINFLLFKTVYEALVAQEIPSTISHSIRCIKKVHHENHCREKILPSENLYFKKQPLMFFKFSEPASLGCKVSLAIEQPIRKFILDSSVLVRLKNRTTFRVSELWKIELTIVKQLMGSEVSAKLAAFKTLLFDTPEQQTTKNMMTLINPDDEYLYEIEIEYTGKPESLTAADVIKIKNTVLTLISPNHLMLTAYHQAIEFIASHILSSEILLARIKSGKWGLKRLLPQVKSMTKADYMKFYPPVGYYVTDKADGIRGIAVIQDTQIYVVADQLYSLGTTGIEPLKPTILDGEFMPEKKEFYGFDVIMYEGNLLTQQGFETRIESLSKGIKVLQAFNIKAEMKPFISLTSADPNVLLKNFESIFKKKTRPYSIDGIILVEPGNSYLNTNTFKWKPTWDNTLDFLVRKCPESLNVPEYAPKKGFSLHLLFVGISGELFKKLALNWCPGYTKLFPVTQRNQNYFPVQFQPSDFPLAFLYYHPDTSSFSNIDGKVLEMRCLKREINYVRWEIVKIREDRQQDLKTGGYFGNDFKTAELTWLNYMDPFSFEELAKGPSGMYFAGAKTGIYRAQTALISFIKQEIIQKISHQSWVIDLGIGKGQDLGRYLDAGVRHLVGIDKDQTALAELVYRKFSHATTRQHKHATNIYVLHQDLAEPAKEISEKVHQIYGFPKEGASSIVSNLFIHYLMKNTQQVENLAVLCHKLLQPGGMVWFTTMLGEQVLELLHENRIELNEVWEARENEVVKFAIKRLFKEDILQETGQEIGVLLPFSNGDFYNEYLVNTAFLIKIFKHHGFSLVQKQSFKDWIPEFQNFSKSLYKILTEADKTWTSLFGFICLRKN.

Lys282 serves as the catalytic N6-GMP-lysine intermediate. In terms of domain architecture, mRNA cap 0 methyltransferase spans 594–868 (GIYRAQTALI…LFGFICLRKN (275 aa)). S-adenosyl-L-methionine-binding positions include Lys607, Gly624, Asp646, and 710-712 (LFI).

This sequence in the N-terminal section; belongs to the dsDNA virus mRNA guanylyltransferase family. The protein in the C-terminal section; belongs to the class I-like SAM-binding methyltransferase superfamily. mRNA cap 0 methyltransferase family. As to quaternary structure, part of the viral DNA-directed RNA polymerase that consists of 8 polII-like subunits (RPB1, RPB2, RPB3, RPB5, RPB6, RPB7, RPB9, RPB10), a capping enzyme and a termination factor.

It localises to the virion. The catalysed reaction is a 5'-end triphospho-ribonucleoside in mRNA + H2O = a 5'-end diphospho-ribonucleoside in mRNA + phosphate + H(+). It catalyses the reaction a 5'-end diphospho-ribonucleoside in mRNA + GTP + H(+) = a 5'-end (5'-triphosphoguanosine)-ribonucleoside in mRNA + diphosphate. It carries out the reaction a 5'-end (5'-triphosphoguanosine)-ribonucleoside in mRNA + S-adenosyl-L-methionine = a 5'-end (N(7)-methyl 5'-triphosphoguanosine)-ribonucleoside in mRNA + S-adenosyl-L-homocysteine. It functions in the pathway mRNA processing; mRNA capping. Its function is as follows. Probably catalyzes the second reaction in the mRNA cap formation pathway. Forms a covalent complex with GTP. The protein is mRNA-capping enzyme of Ornithodoros (relapsing fever ticks).